The primary structure comprises 231 residues: Lactate utilization protein C (231 aa).

It belongs to the LutC/YkgG family.

In terms of biological role, is involved in L-lactate degradation and allows cells to grow with lactate as the sole carbon source. In Macrococcus caseolyticus (strain JCSC5402) (Macrococcoides caseolyticum), this protein is Lactate utilization protein C.